Reading from the N-terminus, the 189-residue chain is Interleukin-23 subunit alpha (189 aa).

A signal peptide spans 1-19 (MLGSRAVMLLLLLPWTAQG). Cysteine 77 and cysteine 89 are disulfide-bonded.

The protein belongs to the IL-6 superfamily. Heterodimer with IL12B; disulfide-linked. The heterodimer is known as interleukin IL-23. Interacts with IL23R; this interaction enables recruitment of IL12RB1. As to expression, secreted by activated dendritic and phagocytic cells and keratinocytes. Also expressed by dermal Langerhans cells (at protein level).

The protein resides in the secreted. Associates with IL12B to form the pro-inflammatory cytokine IL-23 that plays different roles in innate and adaptive immunity. Released by antigen-presenting cells such as dendritic cells or macrophages, binds to a heterodimeric receptor complex composed of IL12RB1 and IL23R to activate JAK2 and TYK2 which then phosphorylate the receptor to form a docking site leading to the phosphorylation of STAT3 and STAT4. This process leads to activation of several pathways including p38 MAPK or NF-kappa-B and promotes the production of pro-inflammatory cytokines such as interleukin-17A/IL17A. In turn, participates in the early and effective intracellular bacterial clearance. Promotes the expansion and survival of T-helper 17 cells, a CD4-positive helper T-cell subset that produces IL-17, as well as other IL-17-producing cells. The protein is Interleukin-23 subunit alpha (IL23A) of Homo sapiens (Human).